Here is a 115-residue protein sequence, read N- to C-terminus: Large ribosomal subunit protein bL20 (115 aa).

Belongs to the bacterial ribosomal protein bL20 family.

Its function is as follows. Binds directly to 23S ribosomal RNA and is necessary for the in vitro assembly process of the 50S ribosomal subunit. It is not involved in the protein synthesizing functions of that subunit. The chain is Large ribosomal subunit protein bL20 from Chlorobaculum tepidum (strain ATCC 49652 / DSM 12025 / NBRC 103806 / TLS) (Chlorobium tepidum).